Here is a 761-residue protein sequence, read N- to C-terminus: Neurotrypsin (761 aa).

Residues 1–21 (MALARCVLAVILGVLSEVARA) form the signal peptide. The segment at 26–88 (HSPLHRPHPS…PTISRRCGAG (63 aa)) is disordered. Residues 54–63 (TPRFPLPPRA) are compositionally biased toward pro residues. Residues 85-157 (CGAGEPWGNA…GKVDWGYCDC (73 aa)) enclose the Kringle domain. Disulfide bonds link Cys85–Cys157, Cys101–Cys141, Cys130–Cys155, Cys191–Cys255, Cys204–Cys265, Cys235–Cys245, Cys298–Cys361, Cys311–Cys371, Cys341–Cys351, Cys411–Cys475, Cys424–Cys485, Cys455–Cys465, Cys505–Cys636, Cys547–Cys563, Cys651–Cys717, Cys680–Cys694, and Cys707–Cys736. N-linked (GlcNAc...) asparagine glycosylation occurs at Asn93. 3 consecutive SRCR domains span residues 166-267 (IRLV…SCAP), 273-373 (IRLS…TCYP), and 386-487 (IRLM…ICDY). The zymogen activation region stretch occupies residues 505–516 (CGLRLLHRRQKR). The region spanning 517–760 (IIGGNNSLRG…FVPWIKSVTS (244 aa)) is the Peptidase S1 domain. Asn521 carries N-linked (GlcNAc...) asparagine glycosylation. The active-site Charge relay system is His562. An N-linked (GlcNAc...) asparagine glycan is attached at Asn569. Asp612 functions as the Charge relay system in the catalytic mechanism. Residue Ser711 is the Charge relay system of the active site.

The protein belongs to the peptidase S1 family.

The protein resides in the secreted. Its function is as follows. Plays a role in neuronal plasticity and the proteolytic action may subserve structural reorganizations associated with learning and memory operations. This Rattus norvegicus (Rat) protein is Neurotrypsin (Prss12).